Here is a 423-residue protein sequence, read N- to C-terminus: UPF0229 protein Pput_0430 (423 aa).

Residues Glu81–Glu108 form a disordered region. A compositionally biased stretch (gly residues) spans Gln92–Gly107.

The protein belongs to the UPF0229 family.

The protein is UPF0229 protein Pput_0430 of Pseudomonas putida (strain ATCC 700007 / DSM 6899 / JCM 31910 / BCRC 17059 / LMG 24140 / F1).